We begin with the raw amino-acid sequence, 454 residues long: Cholesterol 7-desaturase nvd (454 aa).

Helical transmembrane passes span 13–33 and 47–67; these read VLCPVGALLLCWVGSVLLGAG and TTLSRTPWLVVLVPLLVLWGW. The region spanning 117-221 is the Rieske domain; sequence WYRALDSHLL…SCELNGMVFV (105 aa). The [2Fe-2S] cluster site is built by cysteine 158, histidine 160, cysteine 178, and histidine 181.

This sequence belongs to the cholesterol 7-desaturase family. The cofactor is [2Fe-2S] cluster.

It localises to the membrane. The catalysed reaction is cholesterol + NADPH + O2 + H(+) = 7-dehydrocholesterol + NADP(+) + 2 H2O. The enzyme catalyses cholesterol + NADH + O2 + H(+) = 7-dehydrocholesterol + NAD(+) + 2 H2O. It functions in the pathway steroid hormone biosynthesis; dafachronic acid biosynthesis. In terms of biological role, catalyzes the production of 7-dehydrocholesterol (7-DHC or cholesta-5,7-dien-3beta-ol) by inserting a double bond (desaturating) at the C7-C8 single bond of cholesterol. This reaction is the first step in the synthesis of the steroid hormone Delta(7)-dafachronic acid. The chain is Cholesterol 7-desaturase nvd (nvd) from Xenopus laevis (African clawed frog).